Here is a 93-residue protein sequence, read N- to C-terminus: Large ribosomal subunit protein uL23 (93 aa).

Belongs to the universal ribosomal protein uL23 family. In terms of assembly, part of the 50S ribosomal subunit. Contacts protein L29, and trigger factor when it is bound to the ribosome.

In terms of biological role, one of the early assembly proteins it binds 23S rRNA. One of the proteins that surrounds the polypeptide exit tunnel on the outside of the ribosome. Forms the main docking site for trigger factor binding to the ribosome. This is Large ribosomal subunit protein uL23 from Helicobacter pylori (strain P12).